The chain runs to 180 residues: Large ribosomal subunit protein eL18 (180 aa).

A disordered region spans residues 152-180; sequence FGPAPGVPGSHTKPYVISKSRERTNAHRA. Residues 170-180 are compositionally biased toward basic and acidic residues; sequence KSRERTNAHRA.

The protein belongs to the eukaryotic ribosomal protein eL18 family.

It is found in the cytoplasm. The chain is Large ribosomal subunit protein eL18 (RPL18) from Taenia asiatica (Asian tapeworm).